The chain runs to 2393 residues: Leucine-rich repeat serine/threonine-protein kinase 1 (2393 aa).

ANK repeat units lie at residues 56-86 (HGRT…SLNL), 90-120 (RGKT…PMKS), 123-152 (EGHC…KESE), 197-226 (EDET…HLLQ), 230-259 (SKDT…QLVK), 264-293 (EGST…PSEF), 317-347 (ECRT…SIDG), 361-390 (RGRT…DVNL), 407-437 (IGSG…DTDN), and 439-464 (ALRL…FADP). 5 LRR repeats span residues 532–553 (AITR…LFQM), 555–576 (SLRS…TYYI), 580–600 (SLEI…QFLS), 604–625 (QLQQ…IWLC), and 627–648 (ALKE…ARAS). Residues 649 to 675 (RGERPRLNNSNNNFNTQSPTQESNPIV) are disordered. 3 LRR repeats span residues 718–739 (TLTT…LACT), 742–763 (RLLI…ACVP), and 765–787 (HLRT…SPLH). Residues 797-844 (TSNGSMLPKRRNSPARQHRSRSKSAVRSQRSLSVSRHHALIDPQKEEE) form a disordered region. A compositionally biased stretch (basic residues) spans 804–820 (PKRRNSPARQHRSRSKS). A compositionally biased stretch (polar residues) spans 821–830 (AVRSQRSLSV). Residues 835–844 (ALIDPQKEEE) are compositionally biased toward basic and acidic residues. 4 LRR repeats span residues 856–877 (WLKT…NAAS), 883–905 (ALNV…ARLT), 906–928 (LLSM…YGML), and 930–952 (RLWS…VNVE). Positions 969–1167 (ESKTYHHLRL…NTIYRTAWEV (199 aa)) constitute a Roc domain. GTP-binding positions include 982–989 (GSDGVGKS), 1040–1044 (DFGGQ), and 1098–1101 (TNLD). The COR domain maps to 1233-1422 (FYAACTFLHD…GFWSRLVTRI (190 aa)). 2 disordered regions span residues 1361 to 1382 (CPSP…TDQN) and 1596 to 1633 (RNGS…RTTG). Polar residues-rich tracts occupy residues 1366 to 1382 (GSPT…TDQN) and 1620 to 1633 (ITSS…RTTG). A Protein kinase domain is found at 1694–1992 (LKRSRMLGRG…LVGFCAAPEF (299 aa)). Residues 1700–1708 (LGRGAFGFV) and K1726 contribute to the ATP site. The Proton acceptor role is filled by D1847.

Belongs to the protein kinase superfamily. TKL Ser/Thr protein kinase family. ROCO subfamily. The cofactor is Mg(2+). Mn(2+) is required as a cofactor. In terms of tissue distribution, expressed in cell bodies, but not in dendritic or axonal processes, of adult head neurons. Also present in non-neuronal tissues, such as the body wall musculature and the epithelial cells of the nematode vulva.

It localises to the golgi apparatus. It catalyses the reaction L-seryl-[protein] + ATP = O-phospho-L-seryl-[protein] + ADP + H(+). It carries out the reaction L-threonyl-[protein] + ATP = O-phospho-L-threonyl-[protein] + ADP + H(+). Its function is as follows. Determines polarized sorting of synaptic vesicle (SV) proteins to the axons by excluding SV proteins from the dendrite-specific transport machinery in the Golgi. Role in stress response. Appears to antagonize the effects of pink-1 both in the regulation of axon guidance and stress response. The polypeptide is Leucine-rich repeat serine/threonine-protein kinase 1 (lrk-1) (Caenorhabditis elegans).